The primary structure comprises 116 residues: Large ribosomal subunit protein bL19 (116 aa).

It belongs to the bacterial ribosomal protein bL19 family.

Functionally, this protein is located at the 30S-50S ribosomal subunit interface and may play a role in the structure and function of the aminoacyl-tRNA binding site. The polypeptide is Large ribosomal subunit protein bL19 (Pseudomonas putida (strain ATCC 700007 / DSM 6899 / JCM 31910 / BCRC 17059 / LMG 24140 / F1)).